We begin with the raw amino-acid sequence, 1033 residues long: Translation initiation factor IF-2 (1033 aa).

The segment at Ala49 to Pro432 is disordered. The segment covering Ser59–Ala113 has biased composition (low complexity). Composition is skewed to pro residues over residues Pro114–Ala140 and Pro148–Pro164. Residues Pro171 to Gly189 show a composition bias toward low complexity. Residues Gln190–Arg201 are compositionally biased toward gly residues. The segment covering Ala236–Gly246 has biased composition (pro residues). Positions Gly247–Pro268 are enriched in gly residues. Low complexity predominate over residues Met305–Pro314. Gly residues predominate over residues Pro318–Gly401. A compositionally biased stretch (basic residues) spans Arg405–Arg414. A tr-type G domain is found at Val526 to Asp698. A G1 region spans residues Gly535 to Thr542. GTP is bound at residue Gly535 to Thr542. The segment at Gly560–His564 is G2. The G3 stretch occupies residues Asp585 to Gly588. GTP-binding positions include Asp585 to His589 and Asn639 to Asp642. The tract at residues Asn639–Asp642 is G4. Positions Ser675–Lys677 are G5.

It belongs to the TRAFAC class translation factor GTPase superfamily. Classic translation factor GTPase family. IF-2 subfamily.

It is found in the cytoplasm. One of the essential components for the initiation of protein synthesis. Protects formylmethionyl-tRNA from spontaneous hydrolysis and promotes its binding to the 30S ribosomal subunits. Also involved in the hydrolysis of GTP during the formation of the 70S ribosomal complex. This Streptomyces coelicolor (strain ATCC BAA-471 / A3(2) / M145) protein is Translation initiation factor IF-2.